The chain runs to 282 residues: Heme oxygenase 1, chloroplastic (282 aa).

The N-terminal 54 residues, 1–54, are a transit peptide targeting the chloroplast; the sequence is MAYLAPISSSLSIFKNPQLSRFQFSSSSPNPLFLRPRIQILSMTMNKSPSLVVV. His86 serves as a coordination point for heme b.

The protein belongs to the heme oxygenase family. As to expression, widely expressed.

It is found in the plastid. The protein resides in the chloroplast. It carries out the reaction heme b + 3 reduced [NADPH--hemoprotein reductase] + 3 O2 = biliverdin IXalpha + CO + Fe(2+) + 3 oxidized [NADPH--hemoprotein reductase] + 3 H2O + H(+). Activated by ascorbate. Key enzyme in the synthesis of the chromophore of the phytochrome family of plant photoreceptors. Catalyzes the opening of the heme ring to form the open-chain tetrapyrrole biliverdin IX with the release of iron and carbon monoxide (CO). Produces specifically the biliverdin IX-alpha isomer. Can form complex with heme, is ferredoxin-dependent and its activity is increased in the presence of ascorbate. Plays a role in salt acclimation signaling. May affect the plastid-to-nucleus signaling pathway by perturbing tetrapyrrole synthesis. The plastid-to-nucleus signal plays an important role in the coordinated expression of both nuclear- and chloroplast-localized genes that encode photosynthesis-related proteins. In Arabidopsis thaliana (Mouse-ear cress), this protein is Heme oxygenase 1, chloroplastic (HO1).